The primary structure comprises 148 residues: Large ribosomal subunit protein uL15 (148 aa).

The interval 1–51 (MNLSNLKPAEGSTKTRKRIGRGPGSGLGGTSTRGHKGAKSRSGYSKKIGFE) is disordered. Positions 21-31 (RGPGSGLGGTS) are enriched in gly residues.

It belongs to the universal ribosomal protein uL15 family. As to quaternary structure, part of the 50S ribosomal subunit.

Its function is as follows. Binds to the 23S rRNA. This is Large ribosomal subunit protein uL15 from Phocaeicola vulgatus (strain ATCC 8482 / DSM 1447 / JCM 5826 / CCUG 4940 / NBRC 14291 / NCTC 11154) (Bacteroides vulgatus).